We begin with the raw amino-acid sequence, 322 residues long: MQAGSWVVGGGDSDSRVLSIQSHVVRGYVGNRAATFPLQVLGFEVDAVNSVQFSNHTGYAHWKGQVLNSDELHALYEGLKLNNVNQYDYVLTGYTRDKSFLAMVVDIVRELKQQNPRLVYVCDPVMGDKWDGEGSMYVPEDLLPVYREKVVPVADIITPNQFEAELLTGRRIHSEEEALAVMDMLHAMGPDTVVITSSDLPSPRGKDYLIALGSQRTRSPDGSVATQRIRMEICKVDAVFVGTGDLFAAMLLAWTHKHPNNLKVACEKTVSAMHHVLRRTIQCAKAKAGEGLKPSPAQLELRMVQSKRDIEDPEVVVQATVL.

Methionine 1 bears the N-acetylmethionine mark. Residues serine 22 and threonine 57 each coordinate pyridoxal. A pyridoxal 5'-phosphate-binding site is contributed by threonine 57. Serine 69 carries the phosphoserine modification. Aspartate 123 contributes to the ATP binding site. Aspartate 123 is a Na(+) binding site. Aspartate 128 contributes to the Mg(2+) binding site. Threonine 158 contributes to the Na(+) binding site. 160-163 (NQFE) provides a ligand contact to ATP. The residue at position 174 (serine 174) is a Phosphoserine. Threonine 196 contributes to the Na(+) binding site. Position 196–197 (196–197 (TS)) interacts with ATP. Residue serine 223 is modified to Phosphoserine. ATP-binding positions include 236 to 238 (VDA) and threonine 243. 244–245 (GD) provides a ligand contact to pyridoxal 5'-phosphate. The Proton acceptor role is filled by aspartate 245. Serine 295 carries the phosphoserine modification.

Belongs to the pyridoxine kinase family. In terms of assembly, homodimer. Zn(2+) serves as cofactor. The cofactor is Mg(2+). Post-translationally, the N-terminus is blocked.

It is found in the cytoplasm. Its subcellular location is the cytosol. It catalyses the reaction pyridoxal + ATP = pyridoxal 5'-phosphate + ADP + H(+). The catalysed reaction is pyridoxamine + ATP = pyridoxamine 5'-phosphate + ADP + H(+). It carries out the reaction pyridoxine + ATP = pyridoxine 5'-phosphate + ADP + H(+). Its pathway is cofactor metabolism; pyridoxal 5'-phosphate salvage; pyridoxal 5'-phosphate from pyridoxal: step 1/1. It participates in cofactor metabolism; pyridoxal 5'-phosphate salvage; pyridoxine 5'-phosphate from pyridoxine: step 1/1. It functions in the pathway cofactor metabolism; pyridoxal 5'-phosphate salvage; pyridoxamine 5'-phosphate from pyridoxamine: step 1/1. Activity is increased in the presence of K(+)or Na(+). In terms of biological role, catalyzes the phosphorylation of the dietary vitamin B6 vitamers pyridoxal (PL), pyridoxine (PN) and pyridoxamine (PM) to form pyridoxal 5'-phosphate (PLP), pyridoxine 5'-phosphate (PNP) and pyridoxamine 5'-phosphate (PMP), respectively. PLP is the active form of vitamin B6, and acts as a cofactor for over 140 different enzymatic reactions. This is Pyridoxal kinase (PDXK) from Sus scrofa (Pig).